We begin with the raw amino-acid sequence, 258 residues long: MEEKAKMRRLSTWKLKLRMFLATVLLFGLIYAILMVVGSILGLGGPLFYALLGFGVIFLQYLISPKIVELTMNVHYVSEAEAPRLHAMVDELARRAGIPKPMVGIAEIALPNAFAFGRTKADGRVCVTRGILNLLDEEELRAVLGHEISHIKHSDMIVMTLVSAVPLICYYIFWSTVFSRDDEANLVGIAALIAYFIGQLIVLFISRTREYYADQGSVEIGGQPHKLASALYKLVLRLSPVQQGRPETGRGCQGLLPE.

2 consecutive transmembrane segments (helical) span residues 24–44 (VLLF…LGLG) and 45–65 (GPLF…LISP). His-146 provides a ligand contact to Zn(2+). Residue Glu-147 is part of the active site. His-150 lines the Zn(2+) pocket. 2 helical membrane-spanning segments follow: residues 157–177 (IVMT…WSTV) and 186–206 (LVGI…LFIS). Residue Glu-210 participates in Zn(2+) binding.

The protein belongs to the peptidase M48B family. Zn(2+) is required as a cofactor.

The protein resides in the cell membrane. The polypeptide is Protease HtpX homolog (Methanothermobacter thermautotrophicus (strain ATCC 29096 / DSM 1053 / JCM 10044 / NBRC 100330 / Delta H) (Methanobacterium thermoautotrophicum)).